A 623-amino-acid polypeptide reads, in one-letter code: MPPKVTSELLRQLRQAMRNSEYVTEPIQAYIIPSGDAHQSEYIAPCDCRRAFVSGFDGSAGTAIITEEHAAMWTDGRYFLQAAKQMDSNWTLMKMGLKDTPTQEDWLVSVLPEGSRVGVDPLIIPTDYWKKMAKVLRSAGHHLIPVKENLVDKIWTDRPERPCKPLLTLGLDYTGISWKDKVADLRLKMAERNVMWFVVTALDEIAWLFNLRGSDVEHNPVFFSYAIIGLETIMLFIDGDRIDAPSVKEHLLLDLGLEAEYRIQVHPYKSILSELKALCADLSPREKVWVSDKASYAVSETIPKDHRCCMPYTPICIAKAVKNSAESEGMRRAHIKDAVALCELFNWLEKEVPKGGVTEISAADKAEEFRRQQADFVDLSFPTISSTGPNGAIIHYAPVPETNRTLSLDEVYLIDSGAQYKDGTTDVTRTMHFGTPTAYEKECFTYVLKGHIAVSAAVFPTGTKGHLLDSFARSALWDSGLDYLHGTGHGVGSFLNVHEGPCGISYKTFSDEPLEAGMIVTDEPGYYEDGAFGIRIENVVLVVPVKTKYNFNNRGSLTFEPLTLVPIQTKMIDVDSLTDKECDWLNNYHLTCRDVIGKELQKQGRQEALEWLIRETQPISKQH.

R77 lines the a peptide pocket. At K304 the chain carries N6-acetyllysine. Residue H395 participates in a peptide binding. Residues D415, D426, and H489 each contribute to the Mn(2+) site. Positions 489, 498, and 523 each coordinate a peptide. Residues E523 and E537 each coordinate Mn(2+).

Belongs to the peptidase M24B family. As to quaternary structure, homodimer. It depends on Mn(2+) as a cofactor. As to expression, expressed in all tissues tested, including pancreas, heart, muscle, kidney, liver, lung and brain. Highest levels in pancreas.

The protein localises to the cytoplasm. The protein resides in the cytosol. The catalysed reaction is Release of any N-terminal amino acid, including proline, that is linked to proline, even from a dipeptide or tripeptide.. Inhibited by apstatin and the metal ion chelators EDTA and 1,10-phenanthroline. Partially inhibited by dithiothreitol. Not inhibited by enalaprilat or amastatin. Specifically inhibited by the pseudodipeptide CQ31. Inhibition by CQ31 indirectly activates the CARD8 inflammasome: dipeptide accumulation following PEPD inactivation weaky inhibit dipeptidyl peptidases DDP8 and DPP9, relieving DPP8- and/or DPP9-mediated inhibition of CARD8. In terms of biological role, metalloaminopeptidase that catalyzes the removal of a penultimate prolyl residue from the N-termini of peptides, such as Arg-Pro-Pro. Contributes to the degradation of bradykinin. The chain is Xaa-Pro aminopeptidase 1 from Homo sapiens (Human).